A 229-amino-acid chain; its full sequence is Translation initiation factor IF-3 (229 aa).

Disordered stretches follow at residues 1–21 (MAIQ…TNRR) and 184–229 (QAQR…AGPR). A compositionally biased stretch (low complexity) spans 192–203 (AAAQAAPAAAPQ). Over residues 204-221 (PGAPAAPPAAPAPAPAPE) the composition is skewed to pro residues.

The protein belongs to the IF-3 family. In terms of assembly, monomer.

The protein localises to the cytoplasm. Functionally, IF-3 binds to the 30S ribosomal subunit and shifts the equilibrium between 70S ribosomes and their 50S and 30S subunits in favor of the free subunits, thus enhancing the availability of 30S subunits on which protein synthesis initiation begins. The chain is Translation initiation factor IF-3 from Anaeromyxobacter sp. (strain Fw109-5).